Consider the following 372-residue polypeptide: 4-hydroxy-3-methylbut-2-en-1-yl diphosphate synthase (flavodoxin) (372 aa).

Cys-270, Cys-273, Cys-305, and Glu-312 together coordinate [4Fe-4S] cluster.

This sequence belongs to the IspG family. [4Fe-4S] cluster is required as a cofactor.

The enzyme catalyses (2E)-4-hydroxy-3-methylbut-2-enyl diphosphate + oxidized [flavodoxin] + H2O + 2 H(+) = 2-C-methyl-D-erythritol 2,4-cyclic diphosphate + reduced [flavodoxin]. It functions in the pathway isoprenoid biosynthesis; isopentenyl diphosphate biosynthesis via DXP pathway; isopentenyl diphosphate from 1-deoxy-D-xylulose 5-phosphate: step 5/6. Its function is as follows. Converts 2C-methyl-D-erythritol 2,4-cyclodiphosphate (ME-2,4cPP) into 1-hydroxy-2-methyl-2-(E)-butenyl 4-diphosphate. This Salmonella paratyphi B (strain ATCC BAA-1250 / SPB7) protein is 4-hydroxy-3-methylbut-2-en-1-yl diphosphate synthase (flavodoxin).